Here is a 154-residue protein sequence, read N- to C-terminus: SsrA-binding protein (154 aa).

Residues 134-154 (KRQAIKERQTQREIQRELKER) form a disordered region.

The protein belongs to the SmpB family.

It is found in the cytoplasm. Required for rescue of stalled ribosomes mediated by trans-translation. Binds to transfer-messenger RNA (tmRNA), required for stable association of tmRNA with ribosomes. tmRNA and SmpB together mimic tRNA shape, replacing the anticodon stem-loop with SmpB. tmRNA is encoded by the ssrA gene; the 2 termini fold to resemble tRNA(Ala) and it encodes a 'tag peptide', a short internal open reading frame. During trans-translation Ala-aminoacylated tmRNA acts like a tRNA, entering the A-site of stalled ribosomes, displacing the stalled mRNA. The ribosome then switches to translate the ORF on the tmRNA; the nascent peptide is terminated with the 'tag peptide' encoded by the tmRNA and targeted for degradation. The ribosome is freed to recommence translation, which seems to be the essential function of trans-translation. The sequence is that of SsrA-binding protein from Synechococcus sp. (strain JA-2-3B'a(2-13)) (Cyanobacteria bacterium Yellowstone B-Prime).